Reading from the N-terminus, the 873-residue chain is Zinc finger X-linked protein ZXDB (873 aa).

Disordered stretches follow at residues Met1–Ala23, Arg48–Arg120, Val138–Val184, Glu240–Ile259, and Ala301–Gly330. 2 stretches are compositionally biased toward gly residues: residues Gln14–Ala23 and Ser85–Arg120. An Omega-N-methylarginine modification is found at Arg89. Basic and acidic residues predominate over residues Val150–Gln165. A compositionally biased stretch (pro residues) spans Glu240 to Pro255. Over residues Ala316 to Gly327 the composition is skewed to low complexity. 10 consecutive C2H2-type zinc fingers follow at residues Tyr340–His364, Phe373–His397, Phe403–His427, Phe433–His455, Tyr462–His486, Phe493–His517, Phe523–His547, Phe553–His577, Phe583–His607, and Ser616–His641. A required for interaction with ZXDC region spans residues Tyr340–Asp646. A required for transcriptional activation region spans residues Gln645–Val776.

This sequence belongs to the ZXD family. In terms of assembly, self-associates. Interacts with ZXDC and CIITA.

The protein resides in the nucleus. Its function is as follows. Cooperates with CIITA to promote transcription of MHC class I and MHC class II genes. The sequence is that of Zinc finger X-linked protein ZXDB (Zxdb) from Mus musculus (Mouse).